A 410-amino-acid polypeptide reads, in one-letter code: Methylamine dehydrogenase heavy chain (410 aa).

The first 35 residues, 1 to 35, serve as a signal peptide directing secretion; sequence MTHAYTKVRQALCYGSATLGAAALAALIAAGSAAA.

The protein belongs to the aromatic amine dehydrogenase heavy chain family. As to quaternary structure, tetramer of two light and two heavy chains.

Its subcellular location is the periplasm. The enzyme catalyses 2 oxidized [amicyanin] + methylamine + H2O = 2 reduced [amicyanin] + formaldehyde + NH4(+) + 2 H(+). Methylamine dehydrogenase carries out the oxidation of methylamine. Electrons are passed from methylamine dehydrogenase to amicyanin. The chain is Methylamine dehydrogenase heavy chain (mauB) from Methylorubrum extorquens (strain ATCC 14718 / DSM 1338 / JCM 2805 / NCIMB 9133 / AM1) (Methylobacterium extorquens).